The primary structure comprises 390 residues: tRNA (guanine(26)-N(2))-dimethyltransferase (390 aa).

The Trm1 methyltransferase domain occupies 4 to 378 (HIIEEGLVKI…MPLDELKQLI (375 aa)). S-adenosyl-L-methionine contacts are provided by R37, R67, D85, D112, and A113. Zn(2+) is bound by residues C245, C248, C265, and C268.

This sequence belongs to the class I-like SAM-binding methyltransferase superfamily. Trm1 family.

It carries out the reaction guanosine(26) in tRNA + 2 S-adenosyl-L-methionine = N(2)-dimethylguanosine(26) in tRNA + 2 S-adenosyl-L-homocysteine + 2 H(+). In terms of biological role, dimethylates a single guanine residue at position 26 of a number of tRNAs using S-adenosyl-L-methionine as donor of the methyl groups. This Methanosphaera stadtmanae (strain ATCC 43021 / DSM 3091 / JCM 11832 / MCB-3) protein is tRNA (guanine(26)-N(2))-dimethyltransferase.